We begin with the raw amino-acid sequence, 382 residues long: GTPase Obg (382 aa).

Residues 2–161 (VKFADESKIR…REIIVELNII (160 aa)) form the Obg domain. The 167-residue stretch at 162-328 (ADIGLVGFPN…VKKAFIRLAD (167 aa)) folds into the OBG-type G domain. GTP-binding positions include 168–175 (GFPNAGKS), 193–197 (FTTKI), 215–218 (DIPG), 282–285 (TKLD), and 309–311 (SLY). Residues Ser175 and Thr195 each coordinate Mg(2+). The tract at residues 360–382 (EEKNDDEHFGATVSLSRKRKPKK) is disordered.

It belongs to the TRAFAC class OBG-HflX-like GTPase superfamily. OBG GTPase family. Monomer. The cofactor is Mg(2+).

Its subcellular location is the cytoplasm. Functionally, an essential GTPase which binds GTP, GDP and possibly (p)ppGpp with moderate affinity, with high nucleotide exchange rates and a fairly low GTP hydrolysis rate. Plays a role in control of the cell cycle, stress response, ribosome biogenesis and in those bacteria that undergo differentiation, in morphogenesis control. The chain is GTPase Obg from Treponema denticola (strain ATCC 35405 / DSM 14222 / CIP 103919 / JCM 8153 / KCTC 15104).